Here is a 183-residue protein sequence, read N- to C-terminus: Ribulose bisphosphate carboxylase small subunit, chloroplastic 5 (183 aa).

The N-terminal 42 residues, 1-42 (MAAAMMNKSVLLNKQCGKPAAVPKVVMSKGGFARTSAVNKNR), are a transit peptide targeting the chloroplast.

The protein belongs to the RuBisCO small chain family. In terms of assembly, heterohexadecamer of 8 large and 8 small subunits.

Its subcellular location is the plastid. It is found in the chloroplast. In terms of biological role, ruBisCO catalyzes two reactions: the carboxylation of D-ribulose 1,5-bisphosphate, the primary event in carbon dioxide fixation, as well as the oxidative fragmentation of the pentose substrate. Both reactions occur simultaneously and in competition at the same active site. Although the small subunit is not catalytic it is essential for maximal activity. In Acetabularia acetabulum (Mermaid's wine glass), this protein is Ribulose bisphosphate carboxylase small subunit, chloroplastic 5.